The chain runs to 335 residues: Cytoskeleton protein RodZ (335 aa).

The Cytoplasmic portion of the chain corresponds to 1–111; it reads MNTEATHDQN…LGKRRKKRDG (111 aa). The region spanning 19 to 71 is the HTH cro/C1-type domain; it reads LRNAREQLGLSQQAVAERLCLKVSTVRDIEEDKAPADLASTFLRGYIRSYARL. The segment at residues 30-49 is a DNA-binding region (H-T-H motif); it reads QQAVAERLCLKVSTVRDIEE. Residues 112–132 traverse the membrane as a helical; Signal-anchor for type II membrane protein segment; that stretch reads WLMTFTWLVLFVVIGLSGAWW. Residues 133–335 are Periplasmic-facing; it reads WQDHKAQQEE…TLNAEQSPAQ (203 aa). Over residues 148 to 164 the composition is skewed to polar residues; the sequence is DQSSAELNNNQSQSVPL. Residues 148-244 form a disordered region; sequence DQSSAELNNN…PLPTDQAGVT (97 aa). Composition is skewed to low complexity over residues 165–205 and 217–239; these read DTST…DPQQ and DTAA…LPTD.

Belongs to the RodZ family.

The protein resides in the cell inner membrane. In terms of biological role, cytoskeletal protein that is involved in cell-shape control through regulation of the length of the long axis. This Escherichia coli O81 (strain ED1a) protein is Cytoskeleton protein RodZ.